A 159-amino-acid polypeptide reads, in one-letter code: Neurotrophin-3 (159 aa).

The first 3 residues, 1–3 (IQS), serve as a signal peptide directing secretion. A propeptide spanning residues 4 to 115 (TSMDQGILTE…VQNRTSRRKR (112 aa)) is cleaved from the precursor. The tract at residues 91–129 (APLEPPPLYLTEEPLVQNRTSRRKREGKRHRGEYSVCDS) is disordered. A glycan (N-linked (GlcNAc...) asparagine) is linked at Asn-108. Positions 110 to 121 (TSRRKREGKRHR) are enriched in basic residues.

This sequence belongs to the NGF-beta family.

It localises to the secreted. Seems to promote the survival of visceral and proprioceptive sensory neurons. In Candoia carinata (Papuan tree boa), this protein is Neurotrophin-3 (NTF3).